The following is a 401-amino-acid chain: Nicotinate phosphoribosyltransferase (401 aa).

H221 carries the phosphohistidine; by autocatalysis modification.

Belongs to the NAPRTase family. Post-translationally, transiently phosphorylated on a His residue during the reaction cycle. Phosphorylation strongly increases the affinity for substrates and increases the rate of nicotinate D-ribonucleotide production. Dephosphorylation regenerates the low-affinity form of the enzyme, leading to product release.

The enzyme catalyses nicotinate + 5-phospho-alpha-D-ribose 1-diphosphate + ATP + H2O = nicotinate beta-D-ribonucleotide + ADP + phosphate + diphosphate. It functions in the pathway cofactor biosynthesis; NAD(+) biosynthesis; nicotinate D-ribonucleotide from nicotinate: step 1/1. Its function is as follows. Catalyzes the synthesis of beta-nicotinate D-ribonucleotide from nicotinate and 5-phospho-D-ribose 1-phosphate at the expense of ATP. The chain is Nicotinate phosphoribosyltransferase from Yersinia enterocolitica serotype O:8 / biotype 1B (strain NCTC 13174 / 8081).